A 185-amino-acid chain; its full sequence is MIDEILFEAEEHMNTSVERTRDELVNIRTGRANPAMFNGVIADYYGVPTPITQMATISVPEARMLLIKPYEMSMMNEIENAIRNSDLGVNPTNDGQVLRVTIPQLTEERRRDMAKLAKSKGEDGKIAIRNVRRKGMDQLKKIQKDGDAGEDEVQAAEKELDKVTAKYVAQVDEVVAKKEAELMEV.

Belongs to the RRF family.

The protein resides in the cytoplasm. Functionally, responsible for the release of ribosomes from messenger RNA at the termination of protein biosynthesis. May increase the efficiency of translation by recycling ribosomes from one round of translation to another. This Corynebacterium diphtheriae (strain ATCC 700971 / NCTC 13129 / Biotype gravis) protein is Ribosome-recycling factor.